We begin with the raw amino-acid sequence, 158 residues long: Scytalone dehydratase-like protein CPUR_05428 (158 aa).

Y24 and Y44 together coordinate substrate. Catalysis depends on residues H79 and H104.

It belongs to the scytalone dehydratase family.

It participates in pigment biosynthesis. Its function is as follows. Scytalone dehydratase-like protein; part of the ergochrome gene cluster responsible for the typical purple-black color of the ergot sclerotia. The ergochrome gene cluster produces several ergot pigments including the yellow ergochrome secalonic acid and its derivatives, as well as the red anthraquinones endocrocin and clavorubin. The pathway begins with the synthesis of atrochrysone thioester by the polyketide synthase (PKS) CPUR_05437. The atrochrysone carboxyl ACP thioesterase CPUR_05436 then breaks the thioester bond and releases the atrochrysone carboxylic acid from CPUR_05437. The atrochrysone carboxylic acid is then converted to atrochrysone which is further transformed into emodin anthrone. The next step is performed by the anthrone oxygenase CPUR_05434 that catalyzes the oxidation of emodinanthrone to emodin. Emodin is further modified to yield monodictyphenone via several steps involving CPUR_05427, CPUR_05428, CPUR_05429 and CPUR_05430. The short chain dehydrogenase/reductase CPUR_05418 then catalyzes the C-5 ketoreduction to give the xanthone skeleton of the monomeric units. Ergochromes formation requires further dimerization steps of different xanthone units, probably catalyzed by the cytochrome P450 monooxygenase CPUR_05419. CPUR_05425, CPUR_05426 and CPUR_05431 are unique to Claviceps, thus it is likely that they are involved in further modification of xanthone units or in their dimerization. The yellow ergochromes and the red anthraquinone pigments endocrocin and clavorubin are products from the same PKS derived precursors and the latter are likely shunt products in the pathway of xanthone biosynthesis. It is proposed that atrochrysone carboxylic acid released from the PKS CPUR_05437 can also be converted to endocrocin anthrone which is further oxidized into endocrocin by CPUR_05435. Endocrocin could be then modified to clavorubin, possibly by CPUR_05423 and CPUR_05431. Clavorubin is the principal anthraquinone metabolite produced by the cluster with a much higher yield compared to endocrocin. This chain is Scytalone dehydratase-like protein CPUR_05428, found in Claviceps purpurea (strain 20.1) (Ergot fungus).